A 287-amino-acid polypeptide reads, in one-letter code: 4-hydroxybenzoate octaprenyltransferase (287 aa).

A run of 5 helical transmembrane segments spans residues 20–38, 95–115, 211–231, 235–255, and 266–286; these read IGTLLLMWPCLMALWFAAG, IVFLVMALFAFCLVLLLNPLV, IIAAFQFAALACFIIAGLIAE, IYGGGILAFIGFALYQQKLIF, and FLNNNWAGMALFIALGLDYLV.

This sequence belongs to the UbiA prenyltransferase family. The cofactor is Mg(2+).

The protein resides in the cell inner membrane. The catalysed reaction is all-trans-octaprenyl diphosphate + 4-hydroxybenzoate = 4-hydroxy-3-(all-trans-octaprenyl)benzoate + diphosphate. The protein operates within cofactor biosynthesis; ubiquinone biosynthesis. Functionally, catalyzes the prenylation of para-hydroxybenzoate (PHB) with an all-trans polyprenyl group. Mediates the second step in the final reaction sequence of ubiquinone-8 (UQ-8) biosynthesis, which is the condensation of the polyisoprenoid side chain with PHB, generating the first membrane-bound Q intermediate 3-octaprenyl-4-hydroxybenzoate. This is 4-hydroxybenzoate octaprenyltransferase from Shewanella piezotolerans (strain WP3 / JCM 13877).